A 212-amino-acid chain; its full sequence is Thymidylate kinase (212 aa).

10-17 (GIDGCGKT) serves as a coordination point for ATP.

Belongs to the thymidylate kinase family.

The enzyme catalyses dTMP + ATP = dTDP + ADP. Its function is as follows. Phosphorylation of dTMP to form dTDP in both de novo and salvage pathways of dTTP synthesis. In Synechococcus sp. (strain RCC307), this protein is Thymidylate kinase.